The primary structure comprises 100 residues: Putative protein adenylyltransferase MJ0604 (100 aa).

Residues 29 to 43 carry the GSX(10)DXD motif motif; sequence GSYARGDYTEESDID. The Mg(2+) site is built by aspartate 41 and aspartate 43.

The protein belongs to the MntA antitoxin family. Mg(2+) is required as a cofactor.

It catalyses the reaction L-tyrosyl-[protein] + ATP = O-(5'-adenylyl)-L-tyrosyl-[protein] + diphosphate. The enzyme catalyses O-(5'-adenylyl)-L-tyrosyl-[protein] + ATP = O-[5'-(adenylyl-(5'-&gt;3')-adenylyl)]-L-tyrosyl-[protein] + diphosphate. Putative antitoxin component of a putative type VII toxin-antitoxin (TA) system. Its cognate toxin might be MJ0605, which it might AMPylate. This Methanocaldococcus jannaschii (strain ATCC 43067 / DSM 2661 / JAL-1 / JCM 10045 / NBRC 100440) (Methanococcus jannaschii) protein is Putative protein adenylyltransferase MJ0604.